The sequence spans 885 residues: GPI ethanolamine phosphate transferase 2 (885 aa).

N-linked (GlcNAc...) asparagine glycans are attached at residues Asn-82, Asn-155, and Asn-194. The chain crosses the membrane as a helical span at residues 413-433; sequence DIYAGALILVITALAVIVVFN. An N-linked (GlcNAc...) asparagine glycan is attached at Asn-443. Transmembrane regions (helical) follow at residues 447–467, 473–493, and 495–514; these read VMFY…SSLI, IWYF…FDTF, and SLQN…FMRS. Asn-516 is a glycosylation site (N-linked (GlcNAc...) asparagine). Transmembrane regions (helical) follow at residues 539 to 559, 581 to 601, 648 to 668, 697 to 717, 726 to 746, 768 to 788, 820 to 840, and 865 to 885; these read LMWG…YIQG, GLIS…FKLL, IQLS…RVII, ENIP…KLIY, YILT…FCMG, VFLV…FWSL, ILLV…VNLV, and SWIL…VLLF.

This sequence belongs to the PIGG/PIGN/PIGO family. PIGG subfamily.

Its subcellular location is the endoplasmic reticulum membrane. The protein operates within glycolipid biosynthesis; glycosylphosphatidylinositol-anchor biosynthesis. Functionally, ethanolamine phosphate transferase involved in glycosylphosphatidylinositol-anchor biosynthesis. Transfers ethanolamine phosphate to the GPI second mannose. The sequence is that of GPI ethanolamine phosphate transferase 2 (GPI7) from Candida albicans (strain SC5314 / ATCC MYA-2876) (Yeast).